The primary structure comprises 545 residues: CTP synthase (545 aa).

Residues 1-266 (MTTNYIFVTG…DDYICKRFSL (266 aa)) are amidoligase domain. Ser14 lines the CTP pocket. Ser14 contacts UTP. Residues 15–20 (SLGKGI) and Asp72 each bind ATP. Residues Asp72 and Glu140 each contribute to the Mg(2+) site. Residues 147–149 (DIE), 187–192 (KTKPTQ), and Lys223 contribute to the CTP site. Residues 187–192 (KTKPTQ) and Lys223 each bind UTP. 239–241 (KDV) contributes to the ATP binding site. A Glutamine amidotransferase type-1 domain is found at 291–542 (TIGMIGKYVE…VKAAGDYQKR (252 aa)). Gly352 is a binding site for L-glutamine. Cys379 acts as the Nucleophile; for glutamine hydrolysis in catalysis. Residues 380-383 (LGMQ), Glu403, and Arg470 contribute to the L-glutamine site. Active-site residues include His515 and Glu517.

The protein belongs to the CTP synthase family. As to quaternary structure, homotetramer.

The enzyme catalyses UTP + L-glutamine + ATP + H2O = CTP + L-glutamate + ADP + phosphate + 2 H(+). It carries out the reaction L-glutamine + H2O = L-glutamate + NH4(+). The catalysed reaction is UTP + NH4(+) + ATP = CTP + ADP + phosphate + 2 H(+). Its pathway is pyrimidine metabolism; CTP biosynthesis via de novo pathway; CTP from UDP: step 2/2. With respect to regulation, allosterically activated by GTP, when glutamine is the substrate; GTP has no effect on the reaction when ammonia is the substrate. The allosteric effector GTP functions by stabilizing the protein conformation that binds the tetrahedral intermediate(s) formed during glutamine hydrolysis. Inhibited by the product CTP, via allosteric rather than competitive inhibition. Catalyzes the ATP-dependent amination of UTP to CTP with either L-glutamine or ammonia as the source of nitrogen. Regulates intracellular CTP levels through interactions with the four ribonucleotide triphosphates. The polypeptide is CTP synthase (Yersinia pseudotuberculosis serotype O:1b (strain IP 31758)).